The primary structure comprises 1887 residues: ATP-dependent DNA helicase tlh1 (1887 aa).

Over residues 329–347 the composition is skewed to basic and acidic residues; it reads NQQRREQQDKGENKKRQDD. Disordered stretches follow at residues 329 to 372, 504 to 552, and 1110 to 1135; these read NQQR…EEEE, ERKE…NTDD, and MVEG…EMTQ. 2 stretches are compositionally biased toward acidic residues: residues 360-372 and 524-533; these read LEDD…EEEE and SAEDDNDNDN. Residues 540–549 show a composition bias toward low complexity; sequence NNNNNNNNTN. Positions 1112-1131 are enriched in basic and acidic residues; the sequence is EGDKEKDKTNEEKNKDEVKA. Positions 1200–1375 constitute a Helicase ATP-binding domain; the sequence is YFSLLNRMNL…RQTFCTNFYV (176 aa). Residues 1213 to 1220 and 1240 to 1247 each bind ATP; these read LPTGGGKS and MNMVTLVL. Residues 1322–1325 carry the DEAH box motif; sequence DEAH. Residues 1401–1559 form the Helicase C-terminal domain; the sequence is DLRTLMKRTK…CVRSFLASEM (159 aa). Residues 1613–1643 are disordered; that stretch reads YNASFSSSPPPQPGNSSGMSAMNTNTTSTTP. Low complexity predominate over residues 1626–1642; the sequence is GNSSGMSAMNTNTTSTT. The CCHC-type zinc finger occupies 1804–1821; that stretch reads STCYKCGKADHNLRECKL.

This sequence belongs to the helicase family. RecQ subfamily.

The enzyme catalyses Couples ATP hydrolysis with the unwinding of duplex DNA by translocating in the 3'-5' direction.. The catalysed reaction is ATP + H2O = ADP + phosphate + H(+). Functionally, a probable ATP-dependent 3'-5' DNA helicase. Has a role in telomerase-independent telomere maintenance. The protein is ATP-dependent DNA helicase tlh1 of Schizosaccharomyces pombe (strain 972 / ATCC 24843) (Fission yeast).